Consider the following 182-residue polypeptide: Translation initiation factor IF-3 (182 aa).

Positions Met1–Ile22 are disordered.

The protein belongs to the IF-3 family. As to quaternary structure, monomer.

The protein resides in the cytoplasm. In terms of biological role, IF-3 binds to the 30S ribosomal subunit and shifts the equilibrium between 70S ribosomes and their 50S and 30S subunits in favor of the free subunits, thus enhancing the availability of 30S subunits on which protein synthesis initiation begins. This is Translation initiation factor IF-3 from Xanthomonas campestris pv. campestris (strain ATCC 33913 / DSM 3586 / NCPPB 528 / LMG 568 / P 25).